Consider the following 1077-residue polypeptide: Rap guanine nucleotide exchange factor 1 (1077 aa).

A Glycyl lysine isopeptide (Lys-Gly) (interchain with G-Cter in SUMO2) cross-link involves residue L57. 2 disordered regions span residues 207-235 and 248-300; these read IEKQGRPSPTSPVKPSSPASKPDGPAELP and TGMS…PTRV. The segment covering 213–228 has biased composition (low complexity); it reads PSPTSPVKPSSPASKP. A phosphoserine mark is found at S281, S293, S314, S335, and S360. Positions 281–292 match the SH3-binding motif; the sequence is SPPPALPPKKRQ. Disordered stretches follow at residues 336–376 and 411–494; these read GGSH…QCSR and LSPL…EDLQ. Basic and acidic residues predominate over residues 358 to 371; it reads SKSDEQLSSLDRDS. Positions 451 to 462 match the SH3-binding motif; it reads DTPPALPEKKRR. The segment covering 484–494 has biased composition (polar residues); it reads QYDNISGEDLQ. Y504 bears the Phosphotyrosine; by HCK mark. 2 short sequence motifs (SH3-binding) span residues 538-549 and 606-617; these read EKPPPLPEKKNK and APPPALPPKQRQ. The tract at residues 600–670 is disordered; it reads DSVQELAPPP…SEEEVDELSL (71 aa). Residues 640–651 show a composition bias toward basic and acidic residues; it reads KDSRDGSERAPK. The span at 660 to 669 shows a compositional bias: acidic residues; that stretch reads QSEEEVDELS. The region spanning 688-810 is the N-terminal Ras-GEF domain; the sequence is DGPDVRGGSG…LRKNILDKVD (123 aa). The Ras-GEF domain occupies 840 to 1064; that stretch reads HSHEIAEQLT…WELSLKIKPR (225 aa).

As to quaternary structure, interacts with HCK (via SH3-binding sites). Interacts with CRK (via SH3-binding sites). Phosphorylation at Tyr-504 enhances activity as Rap guanine nucleotide exchange factor. In terms of tissue distribution, ubiquitously expressed in adult and fetus. Expression is high in adult skeletal muscle and placenta and in fetal brain and heart. Low levels of expression in adult and fetal liver.

It localises to the early endosome. In terms of biological role, guanine nucleotide-releasing protein that binds to SH3 domain of CRK and GRB2/ASH. Transduces signals from CRK to activate RAS. Involved in cell branching and adhesion mediated by BCAR1-CRK-RAPGEF1 signaling and activation of RAP1. Plays a role in the establishment of basal endothelial barrier function. Plays a role in nerve growth factor (NGF)-induced sustained activation of Rap1 and neurite outgrowth. The protein is Rap guanine nucleotide exchange factor 1 (RAPGEF1) of Homo sapiens (Human).